Consider the following 537-residue polypeptide: Chaperonin GroEL (537 aa).

ATP contacts are provided by residues 29–32 (TLGP), 86–90 (DGTTT), Gly-413, and Asp-492.

The protein belongs to the chaperonin (HSP60) family. As to quaternary structure, forms a cylinder of 14 subunits composed of two heptameric rings stacked back-to-back. Interacts with the co-chaperonin GroES.

It is found in the cytoplasm. It catalyses the reaction ATP + H2O + a folded polypeptide = ADP + phosphate + an unfolded polypeptide.. Its function is as follows. Together with its co-chaperonin GroES, plays an essential role in assisting protein folding. The GroEL-GroES system forms a nano-cage that allows encapsulation of the non-native substrate proteins and provides a physical environment optimized to promote and accelerate protein folding. The protein is Chaperonin GroEL of Dehalococcoides mccartyi (strain ATCC BAA-2100 / JCM 16839 / KCTC 5957 / BAV1).